We begin with the raw amino-acid sequence, 310 residues long: Ribosomal RNA small subunit methyltransferase H (310 aa).

S-adenosyl-L-methionine-binding positions include 32-34 (AGH), D52, F79, D100, and Q107.

It belongs to the methyltransferase superfamily. RsmH family.

The protein resides in the cytoplasm. The enzyme catalyses cytidine(1402) in 16S rRNA + S-adenosyl-L-methionine = N(4)-methylcytidine(1402) in 16S rRNA + S-adenosyl-L-homocysteine + H(+). In terms of biological role, specifically methylates the N4 position of cytidine in position 1402 (C1402) of 16S rRNA. The chain is Ribosomal RNA small subunit methyltransferase H from Halalkalibacterium halodurans (strain ATCC BAA-125 / DSM 18197 / FERM 7344 / JCM 9153 / C-125) (Bacillus halodurans).